The primary structure comprises 194 residues: MLLPTQTSWVILAGGQASRMGGKDKGLVELNGSPLIQYVINKLSQQDVSITINANRNLDSYQAFAPVVSDSFPDYPGPLGGIHAGLKNASTDWVGFVPCDSPQISDDLVERFCAAVKEDSDILVAHDGEFKQPVFTLFHKRVLPKLEAFLERGDRKIILLYKECVTEYVDFSDAPNCFVNLNTPEELTQFGTLQ.

Residues 12–14 (LAG), Lys-25, Asn-53, Asp-70, and Asp-100 contribute to the GTP site. Residue Asp-100 coordinates Mg(2+).

The protein belongs to the MobA family. In terms of assembly, monomer. It depends on Mg(2+) as a cofactor.

The protein resides in the cytoplasm. It catalyses the reaction Mo-molybdopterin + GTP + H(+) = Mo-molybdopterin guanine dinucleotide + diphosphate. Functionally, transfers a GMP moiety from GTP to Mo-molybdopterin (Mo-MPT) cofactor (Moco or molybdenum cofactor) to form Mo-molybdopterin guanine dinucleotide (Mo-MGD) cofactor. The polypeptide is Molybdenum cofactor guanylyltransferase (Vibrio atlanticus (strain LGP32) (Vibrio splendidus (strain Mel32))).